The sequence spans 376 residues: Chaperone protein DnaJ (376 aa).

One can recognise a J domain in the interval 4–70; it reads DYYQILGVSK…QKRAAYDRFG (67 aa). The CR-type zinc-finger motif lies at 139 to 217; the sequence is GVEKNISFSS…CHGLGRYHKQ (79 aa). Zn(2+) is bound by residues Cys152, Cys155, Cys169, Cys172, Cys191, Cys194, Cys205, and Cys208. CXXCXGXG motif repeat units lie at residues 152 to 159, 169 to 176, 191 to 198, and 205 to 212; these read CDTCHGSG, CDACGGVG, CHKCQGNG, and CKKCHGLG.

This sequence belongs to the DnaJ family. As to quaternary structure, homodimer. The cofactor is Zn(2+).

The protein resides in the cytoplasm. Participates actively in the response to hyperosmotic and heat shock by preventing the aggregation of stress-denatured proteins and by disaggregating proteins, also in an autonomous, DnaK-independent fashion. Unfolded proteins bind initially to DnaJ; upon interaction with the DnaJ-bound protein, DnaK hydrolyzes its bound ATP, resulting in the formation of a stable complex. GrpE releases ADP from DnaK; ATP binding to DnaK triggers the release of the substrate protein, thus completing the reaction cycle. Several rounds of ATP-dependent interactions between DnaJ, DnaK and GrpE are required for fully efficient folding. Also involved, together with DnaK and GrpE, in the DNA replication of plasmids through activation of initiation proteins. This is Chaperone protein DnaJ from Rickettsia bellii (strain RML369-C).